Reading from the N-terminus, the 64-residue chain is Large ribosomal subunit protein bL28 (64 aa).

Positions 1–23 (MARKDQISHRGPLSGNNRSHALN) are disordered.

This sequence belongs to the bacterial ribosomal protein bL28 family.

This Mesomycoplasma hyopneumoniae (strain 232) (Mycoplasma hyopneumoniae) protein is Large ribosomal subunit protein bL28.